Consider the following 285-residue polypeptide: Polyamine aminopropyltransferase (285 aa).

In terms of domain architecture, PABS spans 2-237 (QMWFSQYHTV…GYWLFGFASK (236 aa)). Gln31 is a binding site for S-methyl-5'-thioadenosine. Spermidine is bound at residue Asp86. Residues Glu106 and 137 to 138 (DG) contribute to the S-methyl-5'-thioadenosine site. Asp155 functions as the Proton acceptor in the catalytic mechanism. 155-158 (DSTD) is a spermidine binding site.

Belongs to the spermidine/spermine synthase family. As to quaternary structure, homodimer or homotetramer.

The protein resides in the cytoplasm. The catalysed reaction is S-adenosyl 3-(methylsulfanyl)propylamine + putrescine = S-methyl-5'-thioadenosine + spermidine + H(+). Its pathway is amine and polyamine biosynthesis; spermidine biosynthesis; spermidine from putrescine: step 1/1. Catalyzes the irreversible transfer of a propylamine group from the amino donor S-adenosylmethioninamine (decarboxy-AdoMet) to putrescine (1,4-diaminobutane) to yield spermidine. This is Polyamine aminopropyltransferase from Agathobacter rectalis (strain ATCC 33656 / DSM 3377 / JCM 17463 / KCTC 5835 / VPI 0990) (Eubacterium rectale).